A 249-amino-acid polypeptide reads, in one-letter code: Homeobox-leucine zipper protein HOX6 (249 aa).

Residues 1–32 form a disordered region; it reads MDGEEDSEWMMMDVGGKGGKGGGGGGAADRKK. The span at 15–27 shows a compositional bias: gly residues; the sequence is GGKGGKGGGGGGA. Positions 27–86 form a DNA-binding region, homeobox; it reads AADRKKRFSEEQIKSLESMFATQTKLEPRQKLQLARELGLQPRQVAIWFQNKRARWKSKQ. The segment at 85-129 is leucine-zipper; that stretch reads KQLEREYSALRDDYDALLCSYESLKKEKLALIKQLEKLAEMLQEP. A disordered region spans residues 194 to 249; that stretch reads FLRPSSQHHPPPPHAGAGFTSSEPAADHQSFNFHSSWPSSTEQTCSSTPWWEFESE. Over residues 212 to 242 the composition is skewed to polar residues; that stretch reads FTSSEPAADHQSFNFHSSWPSSTEQTCSSTP.

The protein belongs to the HD-ZIP homeobox family. Class I subfamily. In terms of tissue distribution, expressed in seedlings, roots, leaves, nodes, internodes, flowers and embryo.

The protein localises to the nucleus. In terms of biological role, probable transcription factor that binds to the DNA sequence 5'-CAAT[AT]ATTG-3'. This chain is Homeobox-leucine zipper protein HOX6 (HOX6), found in Oryza sativa subsp. indica (Rice).